Reading from the N-terminus, the 182-residue chain is ADP-ribosylation factor-like protein 3 (182 aa).

Residue glycine 2 is the site of N-myristoyl glycine attachment. GTP-binding positions include 24 to 31, 67 to 71, and 126 to 129; these read GLDNAGKT, DIGGQ, and NKQD.

It belongs to the small GTPase superfamily. Arf family.

It is found in the golgi apparatus membrane. The protein localises to the cytoplasm. Its subcellular location is the cytoskeleton. It localises to the spindle. The protein resides in the nucleus. It is found in the microtubule organizing center. The protein localises to the centrosome. Its subcellular location is the cell projection. It localises to the cilium. Small GTP-binding protein which cycles between an inactive GDP-bound and an active GTP-bound form, and the rate of cycling is regulated by guanine nucleotide exchange factors (GEF) and GTPase-activating proteins (GAP). Required for normal cytokinesis and cilia signaling. Required for targeting proteins to the ciliary membrane by releasing myristoylated protein from unc119 cargo adapters into the cilium. This Taeniopygia guttata (Zebra finch) protein is ADP-ribosylation factor-like protein 3 (ARL3).